The primary structure comprises 463 residues: L-seryl-tRNA(Sec) selenium transferase (463 aa).

Lys295 bears the N6-(pyridoxal phosphate)lysine mark.

It belongs to the SelA family. As to quaternary structure, homodecamer; pentamer of dimers. Binds only one seryl-tRNA(Sec) per dimer. The cofactor is pyridoxal 5'-phosphate.

Its subcellular location is the cytoplasm. The catalysed reaction is L-seryl-tRNA(Sec) + selenophosphate + H(+) = L-selenocysteinyl-tRNA(Sec) + phosphate. It participates in aminoacyl-tRNA biosynthesis; selenocysteinyl-tRNA(Sec) biosynthesis; selenocysteinyl-tRNA(Sec) from L-seryl-tRNA(Sec) (bacterial route): step 1/1. Converts seryl-tRNA(Sec) to selenocysteinyl-tRNA(Sec) required for selenoprotein biosynthesis. In Salmonella arizonae (strain ATCC BAA-731 / CDC346-86 / RSK2980), this protein is L-seryl-tRNA(Sec) selenium transferase.